A 238-amino-acid chain; its full sequence is Ribonuclease PH (238 aa).

Residues arginine 86 and 124 to 126 contribute to the phosphate site; that span reads GTR.

Belongs to the RNase PH family. Homohexameric ring arranged as a trimer of dimers.

It catalyses the reaction tRNA(n+1) + phosphate = tRNA(n) + a ribonucleoside 5'-diphosphate. Phosphorolytic 3'-5' exoribonuclease that plays an important role in tRNA 3'-end maturation. Removes nucleotide residues following the 3'-CCA terminus of tRNAs; can also add nucleotides to the ends of RNA molecules by using nucleoside diphosphates as substrates, but this may not be physiologically important. Probably plays a role in initiation of 16S rRNA degradation (leading to ribosome degradation) during starvation. The chain is Ribonuclease PH from Vibrio cholerae serotype O1 (strain ATCC 39315 / El Tor Inaba N16961).